The sequence spans 251 residues: Pyrroloquinoline-quinone synthase (251 aa).

This sequence belongs to the PqqC family.

The enzyme catalyses 6-(2-amino-2-carboxyethyl)-7,8-dioxo-1,2,3,4,7,8-hexahydroquinoline-2,4-dicarboxylate + 3 O2 = pyrroloquinoline quinone + 2 H2O2 + 2 H2O + H(+). It functions in the pathway cofactor biosynthesis; pyrroloquinoline quinone biosynthesis. Ring cyclization and eight-electron oxidation of 3a-(2-amino-2-carboxyethyl)-4,5-dioxo-4,5,6,7,8,9-hexahydroquinoline-7,9-dicarboxylic-acid to PQQ. The chain is Pyrroloquinoline-quinone synthase from Klebsiella pneumoniae (strain 342).